The following is a 378-amino-acid chain: tRNA-specific 2-thiouridylase MnmA (378 aa).

ATP-binding positions include 7 to 14 and Met33; that span reads GLSGGVDS. An interaction with target base in tRNA region spans residues 102–104; the sequence is NPD. Cys107 acts as the Nucleophile in catalysis. A disulfide bridge connects residues Cys107 and Cys209. Gly132 contacts ATP. The interval 159–161 is interaction with tRNA; that stretch reads KDQ. The Cysteine persulfide intermediate role is filled by Cys209. The tract at residues 316–317 is interaction with tRNA; that stretch reads RY.

It belongs to the MnmA/TRMU family.

It is found in the cytoplasm. It carries out the reaction S-sulfanyl-L-cysteinyl-[protein] + uridine(34) in tRNA + AH2 + ATP = 2-thiouridine(34) in tRNA + L-cysteinyl-[protein] + A + AMP + diphosphate + H(+). Catalyzes the 2-thiolation of uridine at the wobble position (U34) of tRNA, leading to the formation of s(2)U34. This is tRNA-specific 2-thiouridylase MnmA from Aster yellows witches'-broom phytoplasma (strain AYWB).